We begin with the raw amino-acid sequence, 500 residues long: Probable betaine aldehyde dehydrogenase (500 aa).

Residue Gly249–Gly254 coordinates NAD(+). Glu271 functions as the Proton acceptor in the catalytic mechanism. The active-site Nucleophile is Cys305.

This sequence belongs to the aldehyde dehydrogenase family.

It catalyses the reaction betaine aldehyde + NAD(+) + H2O = glycine betaine + NADH + 2 H(+). The protein operates within amine and polyamine biosynthesis; betaine biosynthesis via choline pathway; betaine from betaine aldehyde: step 1/1. This is Probable betaine aldehyde dehydrogenase (meu8) from Schizosaccharomyces pombe (strain 972 / ATCC 24843) (Fission yeast).